The following is a 457-amino-acid chain: Argininosuccinate lyase (457 aa).

It belongs to the lyase 1 family. Argininosuccinate lyase subfamily.

The protein localises to the cytoplasm. It catalyses the reaction 2-(N(omega)-L-arginino)succinate = fumarate + L-arginine. It participates in amino-acid biosynthesis; L-arginine biosynthesis; L-arginine from L-ornithine and carbamoyl phosphate: step 3/3. The chain is Argininosuccinate lyase from Escherichia coli O139:H28 (strain E24377A / ETEC).